A 385-amino-acid polypeptide reads, in one-letter code: Homoserine O-succinyltransferase (385 aa).

Residues 51 to 360 (NAVLICHALS…DSPHGHDAFL (310 aa)) enclose the AB hydrolase-1 domain. Ser-157 (nucleophile) is an active-site residue. Arg-227 is a substrate binding site. Residues Asp-323 and His-356 contribute to the active site. Asp-357 serves as a coordination point for substrate.

The protein belongs to the AB hydrolase superfamily. MetX family. As to quaternary structure, homodimer.

The protein localises to the cytoplasm. The enzyme catalyses L-homoserine + succinyl-CoA = O-succinyl-L-homoserine + CoA. Its pathway is amino-acid biosynthesis; L-methionine biosynthesis via de novo pathway; O-succinyl-L-homoserine from L-homoserine: step 1/1. Functionally, transfers a succinyl group from succinyl-CoA to L-homoserine, forming succinyl-L-homoserine. The protein is Homoserine O-succinyltransferase of Hahella chejuensis (strain KCTC 2396).